The sequence spans 277 residues: Shikimate dehydrogenase (NADP(+)) (277 aa).

Shikimate-binding positions include serine 15–serine 17 and threonine 62. Lysine 66 acts as the Proton acceptor in catalysis. Shikimate-binding residues include asparagine 87 and aspartate 102. NADP(+) contacts are provided by residues glycine 127–alanine 131, asparagine 151–lysine 156, and isoleucine 219. Tyrosine 221 lines the shikimate pocket. Glycine 242 is a binding site for NADP(+).

This sequence belongs to the shikimate dehydrogenase family. In terms of assembly, homodimer.

It carries out the reaction shikimate + NADP(+) = 3-dehydroshikimate + NADPH + H(+). Its pathway is metabolic intermediate biosynthesis; chorismate biosynthesis; chorismate from D-erythrose 4-phosphate and phosphoenolpyruvate: step 4/7. Functionally, involved in the biosynthesis of the chorismate, which leads to the biosynthesis of aromatic amino acids. Catalyzes the reversible NADPH linked reduction of 3-dehydroshikimate (DHSA) to yield shikimate (SA). The protein is Shikimate dehydrogenase (NADP(+)) of Bacillus cereus (strain B4264).